The following is a 309-amino-acid chain: Curved DNA-binding protein (309 aa).

The 65-residue stretch at 5–69 (DYYAILGVKP…ERRAEYDQLR (65 aa)) folds into the J domain.

It is found in the cytoplasm. Its subcellular location is the nucleoid. In terms of biological role, DNA-binding protein that preferentially recognizes a curved DNA sequence. It is probably a functional analog of DnaJ; displays overlapping activities with DnaJ, but functions under different conditions, probably acting as a molecular chaperone in an adaptive response to environmental stresses other than heat shock. Lacks autonomous chaperone activity; binds native substrates and targets them for recognition by DnaK. Its activity is inhibited by the binding of CbpM. The sequence is that of Curved DNA-binding protein from Serratia proteamaculans (strain 568).